Consider the following 279-residue polypeptide: NADPH-dependent 7-cyano-7-deazaguanine reductase (279 aa).

86 to 88 is a binding site for substrate; sequence IES. 88–89 contacts NADPH; it reads SK. The Thioimide intermediate role is filled by Cys187. The active-site Proton donor is the Asp194. 226–227 is a substrate binding site; the sequence is HE. 255–256 provides a ligand contact to NADPH; that stretch reads RG.

The protein belongs to the GTP cyclohydrolase I family. QueF type 2 subfamily. As to quaternary structure, homodimer.

The protein resides in the cytoplasm. The catalysed reaction is 7-aminomethyl-7-carbaguanine + 2 NADP(+) = 7-cyano-7-deazaguanine + 2 NADPH + 3 H(+). It participates in tRNA modification; tRNA-queuosine biosynthesis. In terms of biological role, catalyzes the NADPH-dependent reduction of 7-cyano-7-deazaguanine (preQ0) to 7-aminomethyl-7-deazaguanine (preQ1). In Haemophilus influenzae (strain PittEE), this protein is NADPH-dependent 7-cyano-7-deazaguanine reductase.